Consider the following 929-residue polypeptide: Synaptopodin (929 aa).

Met-1 is subject to N-acetylmethionine. Residues Met-1–Ala-12 show a composition bias toward pro residues. Residues Met-1 to Lys-260 are disordered. Basic and acidic residues-rich tracts occupy residues Gly-60–Ala-69 and Ser-91–Val-110. The residue at position 140 (Ser-140) is a Phosphoserine. Over residues Thr-142–Ala-151 the composition is skewed to basic and acidic residues. The segment covering Arg-152 to Gly-170 has biased composition (polar residues). A Phosphoserine modification is found at Ser-207. Over residues Glu-224–Gln-234 the composition is skewed to pro residues. Ser-263 carries the post-translational modification Phosphoserine. Positions Gly-285–Ala-389 are disordered. The span at Leu-317–Ser-332 shows a compositional bias: low complexity. A glycan (N-linked (GlcNAc...) asparagine) is linked at Asn-330. Residues His-333–Ser-379 are compositionally biased toward polar residues. Phosphoserine occurs at positions 501 and 525. Residues Phe-509–Asn-558 form a disordered region. Thr-560 is modified (phosphothreonine). The PPxY motif signature appears at Pro-562–Tyr-565. Ser-580 carries the phosphoserine modification. Residues Pro-581–Tyr-584 carry the PPxY motif motif. Disordered stretches follow at residues Pro-589–Ile-610 and Lys-630–Glu-726. Residues Ala-646–Gly-656 are compositionally biased toward basic and acidic residues. 3 positions are modified to phosphoserine: Ser-685, Ser-702, and Tyr-738. Over residues Ser-685–Ser-698 the composition is skewed to low complexity. The interval Ile-740–Trp-763 is disordered. Thr-746 is modified (phosphothreonine). Phosphoserine occurs at positions 754, 758, and 779. Thr-783 is subject to Phosphothreonine. Pro-784, Thr-804, Arg-812, Lys-826, Ser-833, Ser-854, Pro-871, and Pro-894 each carry phosphoserine. Residues Lys-826 to Ser-839 are compositionally biased toward low complexity. Residues Lys-826–Gly-916 form a disordered region. The segment covering Gly-866–Ala-880 has biased composition (polar residues).

Belongs to the synaptopodin family. As to quaternary structure, interacts with BAIAP1. Interacts with actin. Interacts (via PPxY motifs) with WWC1 (via WW domains). In terms of processing, O-glycosylated. Expressed in cerebral cortex.

The protein localises to the cytoplasm. The protein resides in the cytoskeleton. Its subcellular location is the cell junction. It localises to the tight junction. It is found in the perikaryon. The protein localises to the cell projection. The protein resides in the dendritic spine. Its subcellular location is the postsynaptic density. It localises to the synapse. It is found in the cytosol. Actin-associated protein that may play a role in modulating actin-based shape and motility of dendritic spines and renal podocyte foot processes. Seems to be essential for the formation of spine apparatuses in spines of telencephalic neurons, which is involved in synaptic plasticity. This Homo sapiens (Human) protein is Synaptopodin (SYNPO).